The chain runs to 297 residues: Ribonuclease H2 subunit A (297 aa).

Residues 21–248 (PCVLGIDEAG…ASTIVEKRCV (228 aa)) enclose the RNase H type-2 domain. Asp27, Glu28, and Asp138 together coordinate a divalent metal cation.

Belongs to the RNase HII family. Eukaryotic subfamily. Requires Mn(2+) as cofactor. It depends on Mg(2+) as a cofactor.

The enzyme catalyses Endonucleolytic cleavage to 5'-phosphomonoester.. Its function is as follows. Catalytic subunit of RNase HII, an endonuclease that specifically degrades the RNA of RNA:DNA hybrids. Participates in DNA replication, possibly by mediating the removal of lagging-strand Okazaki fragment RNA primers during DNA replication. Mediates the excision of single ribonucleotides from DNA:RNA duplexes. The sequence is that of Ribonuclease H2 subunit A (rnh-2) from Caenorhabditis elegans.